The primary structure comprises 73 residues: UPF0235 protein PERMA_1406 (73 aa).

This sequence belongs to the UPF0235 family.

This is UPF0235 protein PERMA_1406 from Persephonella marina (strain DSM 14350 / EX-H1).